Consider the following 522-residue polypeptide: MVSTPSPKTKVYLLEQRKNQELNIEHIDEEMRLEQVRQAASKMEWTSFGQAVRRNLLEKRNTIDADGRIDVLNGIAYMKTKMPIEENNLMEEKIRVMAESLGCLHKQTSRGWSINRQEDLIMDFTVNDGEVTTVVLSFWEEPSFYSPEATRMLQLGMWTELRNRISDMLLTYDKLLSRDDRRNCMGAMRMLEMLFGHFSQDPSYTSIHRSNYGFYLPRNDLRAGRVYYLAEPHFRNIRSKDHIFQLQKDDHEVLPYFEFSFAKHDSPCTLPEFDTKGWAESIEANAVICMKLSRGFNLTETTRKKLGAISAKTPSVKHFTNSYRYVTGAVKIENNLQMITQFGDGQTQHFYNVDVNQLRNDGDSVITEIYLKHLQDFHEIIAILRNEAMHISLWESMISACYEKQGMKKHTVAAIKMDVFLTREQIVITFDTKFAPVKVVIQDSGVCEAKVNVVHAQTGLQIAEKIDETLSRKLNETWSIPNMLTYAVSGSDCNLAKIKVPLRSENPETVGPIPTYAAGRSF.

Positions 13–40 (LLEQRKNQELNIEHIDEEMRLEQVRQAA) form a coiled coil.

Belongs to the Mediator complex subunit 1 family. Component of the Mediator complex.

It is found in the nucleus. Functionally, component of the Mediator complex, a coactivator involved in the regulated transcription of nearly all RNA polymerase II-dependent genes. Mediator functions as a bridge to convey information from gene-specific regulatory proteins to the basal RNA polymerase II transcription machinery. Mediator is recruited to promoters by direct interactions with regulatory proteins and serves as a scaffold for the assembly of a functional preinitiation complex with RNA polymerase II and the general transcription factors. In Caenorhabditis elegans, this protein is Mediator of RNA polymerase II transcription subunit 1.2 (mdt-1.2).